The primary structure comprises 338 residues: MSRTSLTRFLIQEQHAGRINADLRQLIAVVARACTSISIAVSKGALGGVLGDAGTGNVQGEAQKKLDVISNEILLEANAWGGHLAACASEEMDHSQPVPDIYPRGDFLLLFDPLDGSSNIDVNVSVGTIFSVLRCPTNVELPGDDAFLQPGSKQIAAGYCIYGPSTQLVLTVGHGTHAFTLDREKGEFVLTTENMQIPAATQEFAINMSNQRHWEAPMQAYVGDLLAGKEGTRGKNFNMRWIASMVADVHRILTRGGIFIYPWDKKDPSKAGKLRLMYEANPMGLLVEQAGGAAWTGRERILDIQPDQLHQRVPVFLGSREEVAEAVRYHHAHDNAQG.

Residues Glu90, Asp112, Leu114, and Asp115 each contribute to the Mg(2+) site. Residues 115-118, Asn207, and Lys273 each bind substrate; that span reads DGSS. Glu279 lines the Mg(2+) pocket.

This sequence belongs to the FBPase class 1 family. As to quaternary structure, homotetramer. It depends on Mg(2+) as a cofactor.

The protein localises to the cytoplasm. The catalysed reaction is beta-D-fructose 1,6-bisphosphate + H2O = beta-D-fructose 6-phosphate + phosphate. It participates in carbohydrate biosynthesis; gluconeogenesis. The polypeptide is Fructose-1,6-bisphosphatase class 1 (Stenotrophomonas maltophilia (strain K279a)).